The chain runs to 87 residues: RNA-binding protein Hfq (87 aa).

The Sm domain maps to 9-68 (DPFLNALRRERIPVSIYLVNGIKLQGQIESFDQFVILLKNTVSQMVYKHAISTVVPARAV).

The protein belongs to the Hfq family. Homohexamer.

Functionally, RNA chaperone that binds small regulatory RNA (sRNAs) and mRNAs to facilitate mRNA translational regulation in response to envelope stress, environmental stress and changes in metabolite concentrations. Also binds with high specificity to tRNAs. This is RNA-binding protein Hfq from Aeromonas hydrophila subsp. hydrophila (strain ATCC 7966 / DSM 30187 / BCRC 13018 / CCUG 14551 / JCM 1027 / KCTC 2358 / NCIMB 9240 / NCTC 8049).